A 508-amino-acid polypeptide reads, in one-letter code: Photosystem II CP47 reaction center protein (508 aa).

6 helical membrane-spanning segments follow: residues 21–36 (SVHI…WAGS), 101–115 (IVFS…IWHW), 140–156 (GIHL…FGAF), 203–218 (IAAG…FHLS), 237–252 (VLSS…AFVV), and 457–472 (SFAL…HGAR).

Belongs to the PsbB/PsbC family. PsbB subfamily. As to quaternary structure, PSII is composed of 1 copy each of membrane proteins PsbA, PsbB, PsbC, PsbD, PsbE, PsbF, PsbH, PsbI, PsbJ, PsbK, PsbL, PsbM, PsbT, PsbX, PsbY, PsbZ, Psb30/Ycf12, at least 3 peripheral proteins of the oxygen-evolving complex and a large number of cofactors. It forms dimeric complexes. The cofactor is Binds multiple chlorophylls. PSII binds additional chlorophylls, carotenoids and specific lipids..

It localises to the plastid. Its subcellular location is the chloroplast thylakoid membrane. One of the components of the core complex of photosystem II (PSII). It binds chlorophyll and helps catalyze the primary light-induced photochemical processes of PSII. PSII is a light-driven water:plastoquinone oxidoreductase, using light energy to abstract electrons from H(2)O, generating O(2) and a proton gradient subsequently used for ATP formation. The sequence is that of Photosystem II CP47 reaction center protein from Olimarabidopsis pumila (Dwarf rocket).